The primary structure comprises 298 residues: ATP synthase gamma chain (298 aa).

The protein belongs to the ATPase gamma chain family. In terms of assembly, F-type ATPases have 2 components, CF(1) - the catalytic core - and CF(0) - the membrane proton channel. CF(1) has five subunits: alpha(3), beta(3), gamma(1), delta(1), epsilon(1). CF(0) has three main subunits: a, b and c.

It is found in the cell inner membrane. Its function is as follows. Produces ATP from ADP in the presence of a proton gradient across the membrane. The gamma chain is believed to be important in regulating ATPase activity and the flow of protons through the CF(0) complex. This is ATP synthase gamma chain from Francisella philomiragia subsp. philomiragia (strain ATCC 25017 / CCUG 19701 / FSC 153 / O#319-036).